We begin with the raw amino-acid sequence, 84 residues long: Putative membrane protein insertion efficiency factor (84 aa).

The segment at 64 to 84 (GGSGYDPPPPRHQPRKWKCEE) is disordered. Basic residues predominate over residues 75 to 84 (HQPRKWKCEE).

The protein belongs to the UPF0161 family.

Its subcellular location is the cell inner membrane. In terms of biological role, could be involved in insertion of integral membrane proteins into the membrane. This chain is Putative membrane protein insertion efficiency factor, found in Caulobacter vibrioides (strain ATCC 19089 / CIP 103742 / CB 15) (Caulobacter crescentus).